Here is a 606-residue protein sequence, read N- to C-terminus: Polyphenol oxidase A1, chloroplastic (606 aa).

A chloroplast-targeting transit peptide spans M1–A92. Residues K32–L63 form a disordered region. The segment covering Q35–R44 has biased composition (basic residues). 2 cysteine pairs are disulfide-bonded: C103–C121 and C120–C182. Residues H181, H202, H211, H333, H337, and H367 each coordinate Cu cation. The 2'-(S-cysteinyl)-histidine (Cys-His) cross-link spans C185 to H202.

This sequence belongs to the tyrosinase family. Cu(2+) is required as a cofactor.

The protein localises to the plastid. The protein resides in the chloroplast thylakoid lumen. The catalysed reaction is 2 catechol + O2 = 2 1,2-benzoquinone + 2 H2O. Catalyzes the oxidation of mono- and o-diphenols to o-diquinones. This is Polyphenol oxidase A1, chloroplastic from Vicia faba (Broad bean).